The following is a 540-amino-acid chain: Collagen alpha-1(XXIII) chain (540 aa).

A compositionally biased stretch (gly residues) spans 1-26; the sequence is MGPGERAGGGGDAGKGNAAGGGGGGR. The interval 1–28 is disordered; that stretch reads MGPGERAGGGGDAGKGNAAGGGGGGRSA. The Cytoplasmic portion of the chain corresponds to 1-34; it reads MGPGERAGGGGDAGKGNAAGGGGGGRSATTAGSR. Residues 35–56 traverse the membrane as a helical; Signal-anchor for type II membrane protein segment; it reads AVSALCLLLSVGSAAACLLLGV. At 57–540 the chain is on the extracellular side; sequence QAAALQGRVA…GLPVPGCWHK (484 aa). Disordered stretches follow at residues 109 to 304 and 316 to 540; these read AREA…GEQG and LDAL…CWHK. Collagen-like domains follow at residues 124–243, 251–305, 321–380, 412–460, and 463–522; these read GRRG…PGKK, QPGP…EQGD, GPPG…MGLS, GPPG…GPPG, and GLPG…PGLD. 2 stretches are compositionally biased toward low complexity: residues 140-156 and 168-183; these read QSGR…DGKP and PGDF…DGAA. Residues 185-195 are compositionally biased toward pro residues; it reads PPGPPGPPGAR. Residues 322–334 are compositionally biased toward pro residues; that stretch reads PPGPQGPPGPPGI. Residues 350-362 are compositionally biased toward basic and acidic residues; the sequence is DGEKGPKGQKGDP. Pro residues predominate over residues 411–422; sequence PGPPGPPGPPGP. Composition is skewed to basic and acidic residues over residues 435-444 and 486-503; these read DGAKGEKGAS and RGEK…ERGV.

In terms of assembly, homotrimer. Undergoes proteolytic cleavage by furin protease to yield a 60 kDa soluble form that forms a homotrimer and exhibits a low affinity interaction with heparin.

The protein localises to the cell membrane. The protein is Collagen alpha-1(XXIII) chain (COL23A1) of Homo sapiens (Human).